The chain runs to 1218 residues: DNA-directed RNA polymerase subunit beta' (1218 aa).

Zn(2+) is bound by residues Cys-60, Cys-62, Cys-75, and Cys-78. Asp-455, Asp-457, and Asp-459 together coordinate Mg(2+). Zn(2+) contacts are provided by Cys-824, Cys-897, Cys-904, and Cys-907. A disordered region spans residues 1195 to 1218 (ENEAQSDKSQDEQEIGEITVDMGE).

It belongs to the RNA polymerase beta' chain family. As to quaternary structure, the RNAP catalytic core consists of 2 alpha, 1 beta, 1 beta' and 1 omega subunit. When a sigma factor is associated with the core the holoenzyme is formed, which can initiate transcription. The cofactor is Mg(2+). Zn(2+) is required as a cofactor.

The catalysed reaction is RNA(n) + a ribonucleoside 5'-triphosphate = RNA(n+1) + diphosphate. In terms of biological role, DNA-dependent RNA polymerase catalyzes the transcription of DNA into RNA using the four ribonucleoside triphosphates as substrates. The sequence is that of DNA-directed RNA polymerase subunit beta' from Natranaerobius thermophilus (strain ATCC BAA-1301 / DSM 18059 / JW/NM-WN-LF).